The following is a 132-amino-acid chain: PGA2-homolog C27.01c (132 aa).

Residues 17–34 (WIRIIVYVGGYMLIRPYL) traverse the membrane as a helical segment. Disordered regions lie at residues 50-90 (LLEG…DAEF) and 106-132 (EYFK…HLED). A compositionally biased stretch (basic and acidic residues) spans 62–75 (EMTHGTKPKEHGEF). The segment covering 76–87 (DTDDEEEEENPD) has biased composition (acidic residues). Residue Thr77 is modified to Phosphothreonine. Over residues 106-115 (EYFKNQDKSP) the composition is skewed to basic and acidic residues. The span at 119–132 (YADDDEDIEEHLED) shows a compositional bias: acidic residues.

This sequence belongs to the PGA2 family.

Its subcellular location is the endoplasmic reticulum membrane. The protein resides in the nucleus membrane. Involved processing and trafficking glycosylated proteins. The polypeptide is PGA2-homolog C27.01c (Schizosaccharomyces pombe (strain 972 / ATCC 24843) (Fission yeast)).